The sequence spans 479 residues: Variant surface glycoprotein ILTAT 1.22 (479 aa).

An N-terminal signal peptide occupies residues 1 to 12 (MDTAQVFALFYM). N-linked (GlcNAc...) asparagine glycans are attached at residues N120 and N458. Residue N462 is the site of GPI-anchor amidated asparagine attachment. Residues 463–479 (NSFAIKTSTLLLAVLLF) constitute a propeptide, removed in mature form.

The protein resides in the cell membrane. Functionally, VSG forms a coat on the surface of the parasite. The trypanosome evades the immune response of the host by expressing a series of antigenically distinct VSGs from an estimated 1000 VSG genes. This is Variant surface glycoprotein ILTAT 1.22 from Trypanosoma brucei brucei.